Here is a 232-residue protein sequence, read N- to C-terminus: Modulator of macroautophagy TMEM150B (232 aa).

Topologically, residues 1–6 are cytoplasmic; that stretch reads MWAWAL. Residues 7-27 form a helical membrane-spanning segment; that stretch reads LPVFLAVFGTVGLWAVYAIAV. The Extracellular portion of the chain corresponds to 28–50; that stretch reads SNNSVNITIEFPYISTCGAYTPQ. 2 N-linked (GlcNAc...) asparagine glycosylation sites follow: N29 and N33. The helical transmembrane segment at 51-71 threads the bilayer; it reads SCLFAQICNICCVLALWIVVI. Residues 72–83 lie on the Cytoplasmic side of the membrane; the sequence is RFQQIRDLGRSS. The helical transmembrane segment at 84–104 threads the bilayer; sequence HLNTAGLVLGFISSIGISILG. The Extracellular segment spans residues 105 to 115; the sequence is NFQQTIIQEVH. Residues 116-136 traverse the membrane as a helical segment; sequence LLGALMAFFLGLAYFWIQAFI. Over 137–153 the chain is Cytoplasmic; that stretch reads TYFSPPSRDNKWLVPVR. The helical transmembrane segment at 154 to 174 threads the bilayer; the sequence is FVLCSQCTCMVICMFVLHSTG. Topologically, residues 175–177 are extracellular; the sequence is FRS. A helical transmembrane segment spans residues 178–198; that stretch reads AAAICEWILVMCFFALFGVFA. Residues 199 to 232 lie on the Cytoplasmic side of the membrane; that stretch reads AEFRHIDFHKLTVQKEGLKVANNDNVVWTVQDVQ.

It belongs to the DRAM/TMEM150 family.

It is found in the cell membrane. The protein localises to the endosome membrane. It localises to the cytoplasmic vesicle. The protein resides in the autophagosome membrane. Functionally, modulator of macroautophagy that causes accumulation of autophagosomes under basal conditions and enhances autophagic flux. Represses cell death and promotes long-term clonogenic survival of cells grown in the absence of glucose in a macroautophagy-independent manner. May have some role in extracellular matrix engulfment or growth factor receptor recycling, both of which can modulate cell survival. This chain is Modulator of macroautophagy TMEM150B, found in Danio rerio (Zebrafish).